Consider the following 469-residue polypeptide: Ribosomal protein uS12 methylthiotransferase RimO (469 aa).

The 116-residue stretch at 17–132 (PRVGFVSLGC…VMDAVHLNLP (116 aa)) folds into the MTTase N-terminal domain. 6 residues coordinate [4Fe-4S] cluster: Cys-26, Cys-62, Cys-91, Cys-167, Cys-171, and Cys-174. The Radical SAM core domain maps to 153–395 (LTPKHYAYLK…AVAEEVSSLK (243 aa)). The TRAM domain occupies 397–469 (QQRVGATMQV…QGHDLVAIPV (73 aa)).

This sequence belongs to the methylthiotransferase family. RimO subfamily. The cofactor is [4Fe-4S] cluster.

It is found in the cytoplasm. The enzyme catalyses L-aspartate(89)-[ribosomal protein uS12]-hydrogen + (sulfur carrier)-SH + AH2 + 2 S-adenosyl-L-methionine = 3-methylsulfanyl-L-aspartate(89)-[ribosomal protein uS12]-hydrogen + (sulfur carrier)-H + 5'-deoxyadenosine + L-methionine + A + S-adenosyl-L-homocysteine + 2 H(+). Functionally, catalyzes the methylthiolation of an aspartic acid residue of ribosomal protein uS12. In Polaromonas sp. (strain JS666 / ATCC BAA-500), this protein is Ribosomal protein uS12 methylthiotransferase RimO.